The following is a 707-amino-acid chain: Ribosome biogenesis protein ENP2 (707 aa).

5 WD repeats span residues 54–94, 178–217, 226–265, 269–310, and 312–351; these read EFSE…LKFD, LDTE…RVSK, NRPF…PSII, GYGF…AYAS, and EPSV…PSPR. The tract at residues 523 to 707 is disordered; that stretch reads LTAAEESDEE…RASKNAFRGM (185 aa). Residue Ser-529 is modified to Phosphoserine. Basic and acidic residues predominate over residues 532 to 544; it reads ERIAMKDGRGHYD. Residues 545-558 are compositionally biased toward acidic residues; it reads YEDEESDEEESDDE. Phosphoserine is present on residues Ser-550 and Ser-555. Composition is skewed to basic and acidic residues over residues 559-598, 629-647, 659-671, and 680-697; these read TNQK…RFMN, ENGK…RGEA, KDGN…HDNS, and NGNK…ENRR.

It belongs to the WD repeat NOL10/ENP2 family. As to quaternary structure, component of the 90S pre-ribosomes.

It localises to the nucleus. The protein resides in the nucleolus. May be involved in rRNA-processing and ribosome biosynthesis. This Saccharomyces cerevisiae (strain ATCC 204508 / S288c) (Baker's yeast) protein is Ribosome biogenesis protein ENP2 (ENP2).